Reading from the N-terminus, the 313-residue chain is Olfactory receptor 2B6 (313 aa).

Over Met1–Leu27 the chain is Extracellular. N-linked (GlcNAc...) asparagine glycosylation is present at Asn5. A helical membrane pass occupies residues Phe28–Val48. The Cytoplasmic portion of the chain corresponds to Ser49–Thr57. Residues Pro58–Val78 traverse the membrane as a helical segment. Over Pro79–Cys97 the chain is Extracellular. Cys97 and Cys189 are disulfide-bonded. A helical transmembrane segment spans residues Val98 to Met118. At Ser119–Gln143 the chain is on the cytoplasmic side. Residues Leu144–Leu164 form a helical membrane-spanning segment. The Extracellular portion of the chain corresponds to Gln165 to Phe200. The helical transmembrane segment at Phe201–Ile221 threads the bilayer. At Ala222–His244 the chain is on the cytoplasmic side. The helical transmembrane segment at Leu245–Pro265 threads the bilayer. The Extracellular segment spans residues His266 to Arg271. The chain crosses the membrane as a helical span at residues Lys272–Leu292. At Arg293 to Asn313 the chain is on the cytoplasmic side.

This sequence belongs to the G-protein coupled receptor 1 family.

Its subcellular location is the cell membrane. Its function is as follows. Odorant receptor. The protein is Olfactory receptor 2B6 of Mus musculus (Mouse).